A 139-amino-acid polypeptide reads, in one-letter code: Thioredoxin H-type (139 aa).

The Thioredoxin domain maps to 20-132 (ELAGGNVHLI…LHKKITAILD (113 aa)). Active-site nucleophile residues include Cys58 and Cys61. Cysteines 58 and 61 form a disulfide.

The protein resides in the cytoplasm. Its function is as follows. Participates in various redox reactions through the reversible oxidation of the active center dithiol to a disulfide. The H form is known to activate a number of cytosolic enzymes. The sequence is that of Thioredoxin H-type from Populus jackii (Balm of Gilead).